A 141-amino-acid chain; its full sequence is MKRNTKIALVMMALSAMAMGSTSAFAHGGHGMWQQNAAPLTSEQQTAWQKIHNDFYAQSSALQQQLVTKRYEYNALLAANPPDSSKINAVAKEMENLRQSLDELRVKRDIAMAEAGIPRGAGMGMGYGGCGGGGHMGMGHW.

The signal sequence occupies residues methionine 1–alanine 26.

It belongs to the ZraP family.

The protein localises to the periplasm. Part of the Zra signaling pathway, an envelope stress response (ESR) system composed of the periplasmic accessory protein ZraP, the histidine kinase ZraS and the transcriptional regulator ZraR. The ZraPSR system contributes to antibiotic resistance and is important for membrane integrity in the presence of membrane-targeting biocides. ZraP acts as a modulator which has both a regulatory and a chaperone function. The zinc-bound form of ZraP modulates the response of the ZraPSR system by inhibiting the expression of the zra genes, probably by interacting with ZraS. The protein is Signaling pathway modulator ZraP (zraP) of Escherichia coli O157:H7.